A 167-amino-acid chain; its full sequence is NADH-ubiquinone oxidoreductase chain 6 (167 aa).

The next 5 membrane-spanning stretches (helical) occupy residues 1–21 (MKMM…VAFA), 27–47 (VYGG…VVSL), 50–70 (VFLG…VFGY), 88–108 (VALS…LMSG), and 143–163 (WALV…LEVV).

The protein belongs to the complex I subunit 6 family. Core subunit of respiratory chain NADH dehydrogenase (Complex I) which is composed of 45 different subunits.

It is found in the mitochondrion inner membrane. It carries out the reaction a ubiquinone + NADH + 5 H(+)(in) = a ubiquinol + NAD(+) + 4 H(+)(out). Functionally, core subunit of the mitochondrial membrane respiratory chain NADH dehydrogenase (Complex I) which catalyzes electron transfer from NADH through the respiratory chain, using ubiquinone as an electron acceptor. Essential for the catalytic activity and assembly of complex I. This is NADH-ubiquinone oxidoreductase chain 6 (MT-ND6) from Osphranter robustus (Wallaroo).